The chain runs to 802 residues: Ent-copalyl diphosphate synthase, chloroplastic (802 aa).

Residues 1 to 60 (MSLQYHVLNSIPSTTFLSSTKTTISSSFLTISGSPLNVARDKSRSGSIHCSKLRTQEYIN) constitute a chloroplast transit peptide. Lys245 provides a ligand contact to substrate. Mg(2+) contacts are provided by Asp377 and Asp379. A DXDD motif motif is present at residues 377 to 380 (DIDD). Lys463 lines the substrate pocket.

Belongs to the terpene synthase family. Tpsc subfamily. It depends on Mg(2+) as a cofactor. Post-translationally, the N-terminus is blocked. In terms of tissue distribution, expressed in roots, leaves, flowers and also in siliques.

It is found in the plastid. The protein localises to the chloroplast. It catalyses the reaction (2E,6E,10E)-geranylgeranyl diphosphate = ent-copalyl diphosphate. The protein operates within plant hormone biosynthesis; gibberellin biosynthesis. Its activity is regulated as follows. Inhibited by high concentrations of magnesium. Catalyzes the conversion of geranylgeranyl diphosphate to the gibberellin precursor ent-copalyl diphosphate. This chain is Ent-copalyl diphosphate synthase, chloroplastic (GA1), found in Arabidopsis thaliana (Mouse-ear cress).